Here is a 227-residue protein sequence, read N- to C-terminus: Large ribosomal subunit protein uL10c (227 aa).

The N-terminal 47 residues, 1–47 (MEATFFTLPSSTSHSYPFSLKSHFNNSLTLPTHPHFKPKSKNLTIRS), are a transit peptide targeting the chloroplast.

Belongs to the universal ribosomal protein uL10 family. In terms of assembly, part of the 50S ribosomal subunit.

The protein localises to the plastid. It is found in the chloroplast. In terms of biological role, this protein binds directly to 23S ribosomal RNA. The protein is Large ribosomal subunit protein uL10c (RPL10) of Nicotiana tabacum (Common tobacco).